The following is a 238-amino-acid chain: Tritrans,polycis-undecaprenyl-diphosphate synthase (geranylgeranyl-diphosphate specific) (238 aa).

The active site involves Asp-18. Asp-18 serves as a coordination point for Mg(2+). Residues 19–22 and 64–66 contribute to the substrate site; these read GNRR and STE. Asn-67 serves as the catalytic Proton acceptor. Substrate-binding positions include Arg-70, Arg-187, and 193–195; that span reads RLS. Mg(2+) is bound at residue Glu-206.

The protein belongs to the UPP synthase family. In terms of assembly, homodimer. Mg(2+) serves as cofactor.

The enzyme catalyses geranylgeranyl diphosphate + 7 isopentenyl diphosphate = tri-trans,hepta-cis-undecaprenyl diphosphate + 7 diphosphate. In terms of biological role, catalyzes the sequential condensation of isopentenyl diphosphate (IPP) with geranylgeranyl diphosphate (GGPP) to yield (2Z,6Z,10Z,14Z,18Z,22Z,26Z,30E,34E,38E)-undecaprenyl diphosphate (tritrans,heptacis-UPP). It is probably the precursor of glycosyl carrier lipids. The polypeptide is Tritrans,polycis-undecaprenyl-diphosphate synthase (geranylgeranyl-diphosphate specific) (Pyrobaculum aerophilum (strain ATCC 51768 / DSM 7523 / JCM 9630 / CIP 104966 / NBRC 100827 / IM2)).